The sequence spans 408 residues: Probable pectate lyase 5 (408 aa).

An N-terminal signal peptide occupies residues 1–27 (MRMTLVHLSLSLFSCLLLVLSPTFIAS). An N-linked (GlcNAc...) asparagine glycan is attached at asparagine 45. 3 residues coordinate Ca(2+): aspartate 206, aspartate 230, and aspartate 234. Arginine 286 is a catalytic residue.

It belongs to the polysaccharide lyase 1 family. It depends on Ca(2+) as a cofactor.

It carries out the reaction Eliminative cleavage of (1-&gt;4)-alpha-D-galacturonan to give oligosaccharides with 4-deoxy-alpha-D-galact-4-enuronosyl groups at their non-reducing ends.. Its pathway is glycan metabolism; pectin degradation; 2-dehydro-3-deoxy-D-gluconate from pectin: step 2/5. This Arabidopsis thaliana (Mouse-ear cress) protein is Probable pectate lyase 5.